The primary structure comprises 219 residues: Probable GTP-binding protein EngB (219 aa).

The EngB-type G domain maps to 31-205; it reads VGVEIAFAGR…LSILNEWCHP (175 aa). GTP-binding positions include 39 to 46, 66 to 70, 84 to 87, 151 to 154, and 184 to 186; these read GRSNAGKS, GRTQL, DLPG, TKSD, and FSS. Positions 46 and 68 each coordinate Mg(2+).

Belongs to the TRAFAC class TrmE-Era-EngA-EngB-Septin-like GTPase superfamily. EngB GTPase family. The cofactor is Mg(2+).

Necessary for normal cell division and for the maintenance of normal septation. The protein is Probable GTP-binding protein EngB of Shewanella denitrificans (strain OS217 / ATCC BAA-1090 / DSM 15013).